A 156-amino-acid chain; its full sequence is ATP synthase subunit b (156 aa).

Residues 7 to 29 (LIGQLIAFALFTWFCVKFVWPPI) form a helical membrane-spanning segment.

This sequence belongs to the ATPase B chain family. In terms of assembly, F-type ATPases have 2 components, F(1) - the catalytic core - and F(0) - the membrane proton channel. F(1) has five subunits: alpha(3), beta(3), gamma(1), delta(1), epsilon(1). F(0) has three main subunits: a(1), b(2) and c(10-14). The alpha and beta chains form an alternating ring which encloses part of the gamma chain. F(1) is attached to F(0) by a central stalk formed by the gamma and epsilon chains, while a peripheral stalk is formed by the delta and b chains.

Its subcellular location is the cell inner membrane. Its function is as follows. F(1)F(0) ATP synthase produces ATP from ADP in the presence of a proton or sodium gradient. F-type ATPases consist of two structural domains, F(1) containing the extramembraneous catalytic core and F(0) containing the membrane proton channel, linked together by a central stalk and a peripheral stalk. During catalysis, ATP synthesis in the catalytic domain of F(1) is coupled via a rotary mechanism of the central stalk subunits to proton translocation. In terms of biological role, component of the F(0) channel, it forms part of the peripheral stalk, linking F(1) to F(0). The chain is ATP synthase subunit b from Actinobacillus succinogenes (strain ATCC 55618 / DSM 22257 / CCUG 43843 / 130Z).